The sequence spans 621 residues: Phosphoenolpyruvate carboxykinase [GTP] (621 aa).

Substrate-binding positions include R83 and 217–219 (YGG). Positions 226 and 245 each coordinate Mn(2+). S267 serves as a coordination point for substrate. Position 268-273 (268-273 (MCGKTS)) interacts with GTP. C269 is a catalytic residue. Residue D286 participates in Mn(2+) binding. Residue 381–383 (NAR) coordinates substrate. 2 residues coordinate GTP: R383 and R415.

The protein belongs to the phosphoenolpyruvate carboxykinase [GTP] family. The cofactor is Mn(2+).

The protein resides in the cytoplasm. The catalysed reaction is oxaloacetate + GTP = phosphoenolpyruvate + GDP + CO2. It functions in the pathway carbohydrate biosynthesis; gluconeogenesis. Catalyzes the conversion of oxaloacetate (OAA) to phosphoenolpyruvate (PEP), the rate-limiting step in the metabolic pathway that produces glucose from lactate and other precursors derived from the citric acid cycle. The chain is Phosphoenolpyruvate carboxykinase [GTP] from Pyrococcus horikoshii (strain ATCC 700860 / DSM 12428 / JCM 9974 / NBRC 100139 / OT-3).